Here is a 157-residue protein sequence, read N- to C-terminus: Regenerating islet-derived protein 4 (157 aa).

A signal peptide spans Met-1–Ser-22. A disulfide bond links Cys-29 and Cys-40. A C-type lectin domain is found at Tyr-36–Lys-154. Asn-49 and Asn-62 each carry an N-linked (GlcNAc...) asparagine glycan. 2 cysteine pairs are disulfide-bonded: Cys-57/Cys-153 and Cys-128/Cys-145. A carbohydrate is bound by residues Asp-97–Gln-102 and Lys-134–Lys-136.

It is found in the secreted. Functionally, calcium-independent lectin displaying mannose-binding specificity and able to maintain carbohydrate recognition activity in an acidic environment. May be involved in inflammatory and metaplastic responses of the gastrointestinal epithelium. The chain is Regenerating islet-derived protein 4 (Reg4) from Mus musculus (Mouse).